A 372-amino-acid polypeptide reads, in one-letter code: Nickel transporter NicT (372 aa).

The next 8 helical transmembrane spans lie at 30-50 (LMFA…TLLV), 55-75 (LSLG…TLGL), 104-124 (VGFF…VMLV), 152-172 (ISGA…VGIV), 218-238 (VGFL…LVLA), 245-265 (GLPW…MCLL), 294-314 (VTGL…LGLI), and 335-355 (TVGF…LLVW).

It belongs to the NiCoT transporter (TC 2.A.52) family.

It is found in the cell membrane. It carries out the reaction Ni(2+)(in) = Ni(2+)(out). With respect to regulation, export of the fluoroquinolone antibiotic norfloxacin is inhibited by the proton ionophore carbonyl cyanide m-chlorophenylhydrazone (CCCP). Nickel may influence the extrusion of antibiotics possibly by facilitating the proton motive force-dependent efflux process. In terms of biological role, involved in nickel uptake. In addition, acts as a drug efflux pump and contributes to moderate tolerance towards different classes of antibiotics, including fluoroquinolones, aminoglycosides and the anti-TB drug isoniazid, with a preference for fluoroquinolones. The drug efflux function is probably dependent on proton motive force (pmf) or ion gradient, and might be facilitated by the presence of Ni(2+) ions. In Mycobacterium tuberculosis (strain ATCC 25618 / H37Rv), this protein is Nickel transporter NicT.